A 573-amino-acid chain; its full sequence is FAD-dependent monooxygenase resA (573 aa).

Positions 1-17 are cleaved as a signal peptide; it reads MYDVIVIGAGWCGLVAA. Ile106 contributes to the FAD binding site. Residue Asn235 is glycosylated (N-linked (GlcNAc...) asparagine).

It belongs to the FAD-binding monooxygenase family. Requires FAD as cofactor.

It participates in antifungal biosynthesis. Functionally, FAD-dependent monooxygenase; part of the gene cluster that mediates the biosynthesis of the tetrahydropyranyl antifungal agent restricticin that acts as an inhibitor of CYP51 and blocks the ergosterol biosynthesis. The highly reducing polyketide synthase resH, the short chain dehydrogenase resG, the cyclase resF, the FAD-dependent monooxygenase resA and the enoylreductase resD are required to generate the first stable intermediate desmethylrestrictinol. ResH with resD biosynthesize the first polyketide chain intermediate that is reduced by resG, followed by epoxidation by resA before 6-endo cyclization via epoxide opening by resF leads to desmethylrestrictinol. The methyltransferase resE then catalyzes the C4 O-methylation of desmethylrestrictinol to produce restrictinol, and the nonribosomal peptide synthetase resC catalyzes the C3 esterification of restrictinol with glycine that leads to restricticin. This is FAD-dependent monooxygenase resA from Aspergillus sclerotiorum.